The chain runs to 83 residues: Short neurotoxin C (83 aa).

Positions 1 to 21 (MKTLLLTLVVVTMVCLDLAYT) are cleaved as a signal peptide. Disulfide bonds link cysteine 24-cysteine 45, cysteine 38-cysteine 62, cysteine 64-cysteine 75, and cysteine 76-cysteine 81.

It belongs to the three-finger toxin family. Short-chain subfamily. Type I alpha-neurotoxin sub-subfamily. Expressed by the venom gland.

The protein localises to the secreted. Binds to muscle nicotinic acetylcholine receptor (nAChR) and inhibit acetylcholine from binding to the receptor, thereby impairing neuromuscular transmission. This is Short neurotoxin C from Laticauda colubrina (Yellow-lipped sea krait).